A 468-amino-acid polypeptide reads, in one-letter code: Soluble pyridine nucleotide transhydrogenase (468 aa).

38–47 is an FAD binding site; it reads ERHYNVGGGC.

This sequence belongs to the class-I pyridine nucleotide-disulfide oxidoreductase family. The cofactor is FAD.

The protein resides in the cytoplasm. The enzyme catalyses NAD(+) + NADPH = NADH + NADP(+). Its function is as follows. Conversion of NADPH, generated by peripheral catabolic pathways, to NADH, which can enter the respiratory chain for energy generation. This is Soluble pyridine nucleotide transhydrogenase from Pectobacterium atrosepticum (strain SCRI 1043 / ATCC BAA-672) (Erwinia carotovora subsp. atroseptica).